A 340-amino-acid chain; its full sequence is Terpene synthase 29 (340 aa).

Mg(2+)-binding residues include aspartate 132, glutamate 197, asparagine 257, serine 261, and glutamate 265. Positions 132-138 (DEPDILE) match the DDXXXXD motif motif. The short motif at 257 to 265 (NDILSFYKE) is the NSE/DTE motif element.

This sequence belongs to the trichodiene synthase family. Mg(2+) is required as a cofactor.

Terpene cyclase that catalyzes the cyclization of farnesyl diphosphate (FPP) to a single major terpene scaffold whose chemical structure is still unknown. This Postia placenta (strain ATCC 44394 / Madison 698-R) (Brown rot fungus) protein is Terpene synthase 29.